The following is a 317-amino-acid chain: NAD-dependent protein deacetylase Sirt6 (317 aa).

The region spanning 27-273 (DEVVAEKCQE…SKVCKLLGVE (247 aa)) is the Deacetylase sirtuin-type domain. 7 residues coordinate NAD(+): alanine 53, threonine 57, phenylalanine 64, arginine 65, tryptophan 71, glutamine 113, and histidine 133. The active-site Proton acceptor is histidine 133. The Zn(2+) site is built by cysteine 141, cysteine 144, cysteine 166, and cysteine 177. 4 residues coordinate NAD(+): glycine 215, asparagine 241, glutamine 243, and valine 259.

It belongs to the sirtuin family. Class IV subfamily. Zn(2+) is required as a cofactor. As to expression, widely expressed.

The protein resides in the nucleus. It localises to the chromosome. The catalysed reaction is N(6)-acetyl-L-lysyl-[protein] + NAD(+) + H2O = 2''-O-acetyl-ADP-D-ribose + nicotinamide + L-lysyl-[protein]. NAD-dependent histone deacylase that acts as a regulator of life span. The chain is NAD-dependent protein deacetylase Sirt6 from Drosophila melanogaster (Fruit fly).